Here is a 1059-residue protein sequence, read N- to C-terminus: DNA (cytosine-5)-methyltransferase CMT1 (1059 aa).

Disordered regions lie at residues 1-196 and 230-272; these read MVPE…GALA and CVGE…DEAR. A compositionally biased stretch (acidic residues) spans 29–41; the sequence is AEAEAVADLDEID. Composition is skewed to basic and acidic residues over residues 42–79, 92–129, and 147–157; these read REMS…EKAA, REMP…EKAA, and SRGKRQRGVEK. Residues 158–167 show a composition bias toward basic residues; it reads VKRRTRKKTA. The segment covering 252 to 262 has biased composition (basic and acidic residues); that stretch reads RRVEDSDDHFV. In terms of domain architecture, BAH spans 312-436; sequence EIYHLDDDVY…VAYSTFANLP (125 aa). Residues 479-1017 form the SAM-dependent MTase C5-type domain; the sequence is ASLLDLYSGC…YALGLAYRGE (539 aa). Residues 584–649 enclose the Chromo domain; it reads FDVEELLEIC…KGHKENILPL (66 aa). Residue C662 is part of the active site.

It belongs to the class I-like SAM-binding methyltransferase superfamily. C5-methyltransferase family.

It is found in the nucleus. It carries out the reaction a 2'-deoxycytidine in DNA + S-adenosyl-L-methionine = a 5-methyl-2'-deoxycytidine in DNA + S-adenosyl-L-homocysteine + H(+). In terms of biological role, involved in CpXpG DNA methylation. May not play a major role in maintaining CpXpG methylation. In Oryza sativa subsp. japonica (Rice), this protein is DNA (cytosine-5)-methyltransferase CMT1.